The sequence spans 3147 residues: MNKNSKIQSPNSSDVAVIGVGFRFPGNSNDPESLWNNLLDGFDAITQVPKERWATSFREMGLIKNKFGGFLKDSEWKNFDPLFFGIGPKEAPFIDPQQRLLLSIVWESLEDAYIRPDELRGSNTGVFIGVSNNDYTKLGFQDNYSISPYTMTGSNSSLNSNRISYCFDFRGPSITVDTACSSSLVSVNLGVQSIQMGECKIAICGGVNALFDPSTSVAFSKLGVLSENGRCNSFSDQASGYVRSEGAGVVVLKSLEQAKLDGDRIYGVIKGVSSNEDGASNGDKNSLTTPSCEAQSINISKAMEKASLSPSDIYYIEAHGTGTPVGDPIEVKALSKIFSNSNNNQLNNFSTDGNDNDDDDDDNTSPEPLLIGSFKSNIGHLESAAGIASLIKCCLMLKNRMLVPSINCSNLNPSIPFDQYNISVIREIRQFPTDKLVNIGINSFGFGGSNCHLIIQEYNNNFKNNSTICNNNNNNNNNIDYLIPISSKTKKSLDKYLILIKTNSNYHKDISFDDFVKFQIKSKQYNLSNRMTTIANDWNSFIKGSNEFHNLIESKDGEGGSSSSNRGIDSANQINTTTTSTINDIEPLLVFVFCGQGPQWNGMIKTLYNSENVFKNTVDHVDSILYKYFGYSILNVLSKIDDNDDSINHPIVAQPSLFLLQIGLVELFKYWGIYPSISVGHSFGEVSSYYLSGIISLETACKIVYVRSSNQNKTMGSGKMLVVSMGFKQWNDQFSAEWSDIEIACYNAPDSIVVTGNEERLKELSIKLSDESNQIFNTFLRSPCSFHSSHQEVIKGSMFEELSNLQSTGETEIPLFSTVTGRQVLSGHVTAQHIYDNVREPVLFQKTIESITSYIKSHYPSNQKVIYVEIAPHPTLFSLIKKSIPSSNKNSSSVLCPLNRKENSNNSYKKFVSQLYFNGVNVDFNFQLNSICDNVNNDHHLNNVKQNSFKETTNSLPRYQWEQDEYWSEPLISRKNRLEGPTTSLLGHRIIYSFPVFQSVLDLQSDNYKYLLDHLVNGKPVFPGAGYLDIIIEFFDYQKQQLNSSDSSNSYIINVDKIQFLNPIHLTENKLQTLQSSFEPIVTKKSAFSVNFFIKDTVEDQSKVKSMSDETWTNTCKATISLEQQQPSPSSTLTLSKKQDLQILRNRCDISKLDKFELYDKISKNLGLQYNSLFQVVDTIETGKDCSFATLSLPEDTLFTTILNPCLLDNCFHGLLTLINEKGSFVVESISSVSIYLENIGSFNQTSVGNVQFYLYTTISKATSFSSEGTCKLFTKDGSLILSIGKFIIKSTNPKSTKTNETIESPLDETFSIEWQSKDSPIPTPQQIQQQSPLNSNPSFIRSTILKDIQFEQYCSSIIHKELINHEKYKNQQSFDINSLENHLNDDQLMESLSISKEYLRFFTRIISIIKQYPKILNEKELKELKEIIELKYPSEVQLLEFEVIEKVSMIIPKLLFENDKQSSMTLFQDNLLTRFYSNSNSTRFYLERVSEMVLESIRPIVREKRVFRILEIGAGTGSLSNVVLTKLNTYLSTLNSNGGSGYNIIIEYTFTDISANFIIGEIQETMCNLYPNVTFKFSVLDLEKEIINSSDFLMGDYDIVLMAYVIHAVSNIKFSIEQLYKLLSPRGWLLCIEPKSNVVFSDLVFGCFNQWWNYYDDIRTTHCSLSESQWNQLLLNQSLNNESSSSSNCYGGFSNVSFIGGEKDVDSHSFILHCQKESISQMKLATTINNGLSSGSIVIVLNSQQLTNMKSYPKVIEYIQEATSLCKTIEIIDSKDVLNSTNSVLEKIQKSLLVFCLLGYDLLENNYQEQSFEYVKLLNLISTTASSSNDKKPPKVLLITKQSERISRSFYSRSLIGISRTSMNEYPNLSITSIDLDTNDYSLQSLLKPIFSNSKFSDNEFIFKKGLMFVSRIFKNKQLLESSNAFETDSSNLYCKASSDLSYKYAIKQSMLTENQIEIKVECVGINFKDNLFYKGLLPQEIFRMGDIYNPPYGLECSGVITRIGSNVTEYSVGQNVFGFARHSLGSHVVTNKDLVILKPDTISFSEAASIPVVYCTAWYSLFNIGQLSNEESILIHSATGGVGLASLNLLKMKNQQQQPLTNVYATVGSNEKKKFLIDNFNNLFKEDGENIFSTRDKEYSNQLESKIDVILNTLSGEFVESNFKSLRSFGRLIDLSATHVYANQQIGLGNFKFDHLYSAVDLERLIDEKPKLLQSILQRITNSIVNGSLEKIPITIFPSTETKDAIELLSKRSHIGKVVVDCTDISKCNPVGDVITNFSMRLPKPNYQLNLNSTLLITGQSGLSIPLLNWLLSKSGGNVKNVVIISKSTMKWKLQTMISHFVSGFGIHFNYVQVDISNYDALSEAIKQLPSDLPPITSVFHLAAIYNDVPMDQVTMSTVESVHNPKVLGAVNLHRISVSFGWKLNHFVLFSSITAITGYPDQSIYNSANSILDALSNFRRFMGLPSFSINLGPMKDEGKVSTNKSIKKLFKSRGLPSLSLNKLFGLLEVVINNPSNHVIPSQLICSPIDFKTYIESFSTMRPKLLHLQPTISKQQSSIINDSTKASSNISLQDKITSKVSDLLSIPISKINFDHPLKHYGLDSLLTVQFKSWIDKEFEKNLFTHIQLATISINSFLEKVNGLSTNNNNNNNSNVKSSPSIVKEEIVTLDKDQQPLLLKEHQHIIISPDIRINKPKRESLIRTPILNKFNQITESIITPSTPSLSQSDVLKTPPIKSLNNTKNSSLINTPPIQSVQQHQKQQQKVQVIQQQQQPLSRLSYKSNNNSFVLGIGISVPGEPISQQSLKDSISNDFSDKAETNEKVKRIFEQSQIKTRHLVRDYTKPENSIKFRHLETITDVNNQFKKVVPDLAQQACLRALKDWGGDKGDITHIVSVTSTGIIIPDVNFKLIDLLGLNKDVERVSLNLMGCLAGLSSLRTAASLAKASPRNRILVVCTEVCSLHFSNTDGGDQMVASSIFADGSAAYIIGCNPRIEETPLYEVMCSINRSFPNTENAMVWDLEKEGWNLGLDASIPIVIGSGIEAFVDTLLDKAKLQTSTAISAKDCEFLIHTGGKSILMNIENSLGIDPKQTKNTWDVYHAYGNMSSASVIFVMDHARKSKSLPTYSISLAFGPGLAFEGCFLKNVV.

One can recognise a Ketosynthase family 3 (KS3) domain in the interval 12 to 457 (SSDVAVIGVG…GSNCHLIIQE (446 aa)). Residues cysteine 180 and histidine 319 each act as for beta-ketoacyl synthase activity in the active site. Positions 345-369 (QLNNFSTDGNDNDDDDDDNTSPEPL) are disordered. A compositionally biased stretch (acidic residues) spans 354–364 (NDNDDDDDDNT). Histidine 380 serves as the catalytic For beta-ketoacyl synthase activity. Positions 672–705 (GIYPSISVGHSFGEVSSYYLSGIISLETACKIVY) are acyl/malonyl transferase. Serine 682 serves as the catalytic For acyl/malonyl transferase activity. The N-terminal hotdog fold stretch occupies residues 976-1127 (NRLEGPTTSL…ATISLEQQQP (152 aa)). The PKS/mFAS DH domain occupies 976 to 1298 (NRLEGPTTSL…IKSTNPKSTK (323 aa)). Histidine 1014 acts as the Proton acceptor; for dehydratase activity in catalysis. The segment at 1149–1298 (DISKLDKFEL…IKSTNPKSTK (150 aa)) is C-terminal hotdog fold. The active-site Proton donor; for dehydratase activity is aspartate 1209. A Carrier domain is found at 2568-2645 (SSNISLQDKI…SFLEKVNGLS (78 aa)). Serine 2605 bears the O-(pantetheine 4'-phosphoryl)serine mark. The disordered stretch occupies residues 2723–2747 (PSLSQSDVLKTPPIKSLNNTKNSSL). Over residues 2738 to 2747 (SLNNTKNSSL) the composition is skewed to polar residues. Positions 2789 to 3147 (VLGIGISVPG…FEGCFLKNVV (359 aa)) are chalcone synthase. Cysteine 2930 is an active-site residue.

In the C-terminal section; belongs to the thiolase-like superfamily. Chalcone/stilbene synthases family. Homodimer. Pantetheine 4'-phosphate is required as a cofactor.

It catalyses the reaction (E)-4-coumaroyl-CoA + 3 malonyl-CoA + 3 H(+) = 2',4,4',6'-tetrahydroxychalcone + 3 CO2 + 4 CoA. It functions in the pathway secondary metabolite biosynthesis; flavonoid biosynthesis. Probable polyketide synthase. Produces only acylpyrones; in vitro. The polypeptide is Probable polyketide synthase 1 (stlA) (Dictyostelium discoideum (Social amoeba)).